Consider the following 283-residue polypeptide: MTARIIDGAALSQRIREEVAQRVQALTAKGVRPGLAVVLVGDDPASQVYVRNKVAACEKAGLHSVKEQYPADLTEAQLLERIDALNRDPSIHGILVQLPLPRHMDAHKVIEAIAAEKDVDGFHISNAGLLMTGQPLFRPCTPYGVMKMLESEGVALRGAEAVIVGASNIVGKPMAMLLLQAGATITICNSKTRDLGAQTRRADVLVVATGKPGMIDGSMIKPGAVVIDVGINRGADGKLCGDVDMASAREVAGAISPVPGGVGPMTIAMLLVNTVEAAERAAA.

Residues 165–167 (GAS), S190, and I231 each bind NADP(+).

The protein belongs to the tetrahydrofolate dehydrogenase/cyclohydrolase family. Homodimer.

The catalysed reaction is (6R)-5,10-methylene-5,6,7,8-tetrahydrofolate + NADP(+) = (6R)-5,10-methenyltetrahydrofolate + NADPH. It catalyses the reaction (6R)-5,10-methenyltetrahydrofolate + H2O = (6R)-10-formyltetrahydrofolate + H(+). The protein operates within one-carbon metabolism; tetrahydrofolate interconversion. Its function is as follows. Catalyzes the oxidation of 5,10-methylenetetrahydrofolate to 5,10-methenyltetrahydrofolate and then the hydrolysis of 5,10-methenyltetrahydrofolate to 10-formyltetrahydrofolate. The polypeptide is Bifunctional protein FolD (Bordetella bronchiseptica (strain ATCC BAA-588 / NCTC 13252 / RB50) (Alcaligenes bronchisepticus)).